Consider the following 660-residue polypeptide: Bifunctional polymyxin resistance protein ArnA (660 aa).

Residues 1-304 form a formyltransferase ArnAFT region; sequence MKAIVFAYHD…EMGIVTDVRV (304 aa). The active-site Proton donor; for formyltransferase activity is the H104. (6R)-10-formyltetrahydrofolate is bound by residues R114 and 136–140; that span reads TAKAD. The tract at residues 314–660 is dehydrogenase ArnADH; the sequence is RRQRVLILGV…RGAVEELGNK (347 aa). Residues D347 and 368–369 each bind NAD(+); that span reads DV. Residues A393, Y398, and 432-433 each bind UDP-alpha-D-glucuronate; that span reads TS. Residue E434 is the Proton acceptor; for decarboxylase activity of the active site. Residues R460, N492, 526–535, and Y613 contribute to the UDP-alpha-D-glucuronate site; that span reads KLVDGGEQKR. R619 functions as the Proton donor; for decarboxylase activity in the catalytic mechanism.

In the N-terminal section; belongs to the Fmt family. UDP-L-Ara4N formyltransferase subfamily. This sequence in the C-terminal section; belongs to the NAD(P)-dependent epimerase/dehydratase family. UDP-glucuronic acid decarboxylase subfamily. In terms of assembly, homohexamer, formed by a dimer of trimers.

The catalysed reaction is UDP-alpha-D-glucuronate + NAD(+) = UDP-beta-L-threo-pentopyranos-4-ulose + CO2 + NADH. It carries out the reaction UDP-4-amino-4-deoxy-beta-L-arabinose + (6R)-10-formyltetrahydrofolate = UDP-4-deoxy-4-formamido-beta-L-arabinose + (6S)-5,6,7,8-tetrahydrofolate + H(+). It participates in nucleotide-sugar biosynthesis; UDP-4-deoxy-4-formamido-beta-L-arabinose biosynthesis; UDP-4-deoxy-4-formamido-beta-L-arabinose from UDP-alpha-D-glucuronate: step 1/3. It functions in the pathway nucleotide-sugar biosynthesis; UDP-4-deoxy-4-formamido-beta-L-arabinose biosynthesis; UDP-4-deoxy-4-formamido-beta-L-arabinose from UDP-alpha-D-glucuronate: step 3/3. Its pathway is bacterial outer membrane biogenesis; lipopolysaccharide biosynthesis. In terms of biological role, bifunctional enzyme that catalyzes the oxidative decarboxylation of UDP-glucuronic acid (UDP-GlcUA) to UDP-4-keto-arabinose (UDP-Ara4O) and the addition of a formyl group to UDP-4-amino-4-deoxy-L-arabinose (UDP-L-Ara4N) to form UDP-L-4-formamido-arabinose (UDP-L-Ara4FN). The modified arabinose is attached to lipid A and is required for resistance to polymyxin and cationic antimicrobial peptides. This is Bifunctional polymyxin resistance protein ArnA from Proteus mirabilis (strain HI4320).